The chain runs to 91 residues: Small ribosomal subunit protein bS16 (91 aa).

Belongs to the bacterial ribosomal protein bS16 family. In terms of assembly, part of the 30S ribosomal subunit.

Functionally, binds to the lower part of the body of the 30S subunit, where it stabilizes two of its domains. The chain is Small ribosomal subunit protein bS16 from Thermus thermophilus.